The chain runs to 359 residues: 3-dehydroquinate synthase (359 aa).

NAD(+) is bound by residues 71 to 76 (DGEAYK), 105 to 109 (GVIGD), 129 to 130 (TT), Lys-142, and Lys-151. The Zn(2+) site is built by Glu-184, His-247, and His-264.

The protein belongs to the sugar phosphate cyclases superfamily. Dehydroquinate synthase family. Requires Co(2+) as cofactor. Zn(2+) is required as a cofactor. The cofactor is NAD(+).

It is found in the cytoplasm. It carries out the reaction 7-phospho-2-dehydro-3-deoxy-D-arabino-heptonate = 3-dehydroquinate + phosphate. The protein operates within metabolic intermediate biosynthesis; chorismate biosynthesis; chorismate from D-erythrose 4-phosphate and phosphoenolpyruvate: step 2/7. Catalyzes the conversion of 3-deoxy-D-arabino-heptulosonate 7-phosphate (DAHP) to dehydroquinate (DHQ). This chain is 3-dehydroquinate synthase, found in Burkholderia mallei (strain NCTC 10247).